We begin with the raw amino-acid sequence, 233 residues long: Lipoprotein-releasing system ATP-binding protein LolD (233 aa).

In terms of domain architecture, ABC transporter spans 6–233 (LQCDNLCKRY…TAELSLMGAE (228 aa)). 42–49 (GSSGSGKS) provides a ligand contact to ATP.

Belongs to the ABC transporter superfamily. Lipoprotein translocase (TC 3.A.1.125) family. The complex is composed of two ATP-binding proteins (LolD) and two transmembrane proteins (LolC and LolE).

It localises to the cell inner membrane. Its function is as follows. Part of the ABC transporter complex LolCDE involved in the translocation of mature outer membrane-directed lipoproteins, from the inner membrane to the periplasmic chaperone, LolA. Responsible for the formation of the LolA-lipoprotein complex in an ATP-dependent manner. In Escherichia coli O6:K15:H31 (strain 536 / UPEC), this protein is Lipoprotein-releasing system ATP-binding protein LolD.